We begin with the raw amino-acid sequence, 202 residues long: Large ribosomal subunit protein bL17 (202 aa).

The interval 132–202 (DAAQKAASAG…TEVEKADDDK (71 aa)) is disordered. A compositionally biased stretch (low complexity) spans 134–168 (AQKAASAGAQEVTAAAAPQAAVEPEAVETEASAET). The span at 169–193 (AEAEVETAEVEAVDEASAEEADEAT) shows a compositional bias: acidic residues.

It belongs to the bacterial ribosomal protein bL17 family. In terms of assembly, part of the 50S ribosomal subunit. Contacts protein L32.

The polypeptide is Large ribosomal subunit protein bL17 (Mycolicibacterium vanbaalenii (strain DSM 7251 / JCM 13017 / BCRC 16820 / KCTC 9966 / NRRL B-24157 / PYR-1) (Mycobacterium vanbaalenii)).